The chain runs to 345 residues: S-adenosylmethionine:tRNA ribosyltransferase-isomerase (345 aa).

It belongs to the QueA family. In terms of assembly, monomer.

It localises to the cytoplasm. It catalyses the reaction 7-aminomethyl-7-carbaguanosine(34) in tRNA + S-adenosyl-L-methionine = epoxyqueuosine(34) in tRNA + adenine + L-methionine + 2 H(+). It functions in the pathway tRNA modification; tRNA-queuosine biosynthesis. Transfers and isomerizes the ribose moiety from AdoMet to the 7-aminomethyl group of 7-deazaguanine (preQ1-tRNA) to give epoxyqueuosine (oQ-tRNA). The protein is S-adenosylmethionine:tRNA ribosyltransferase-isomerase of Helicobacter pylori (strain J99 / ATCC 700824) (Campylobacter pylori J99).